The following is a 340-amino-acid chain: GTPase Obg (340 aa).

One can recognise an Obg domain in the interval 1–158 (MSFIDEAKIY…KHIILKLKII (158 aa)). The 167-residue stretch at 159-325 (SDVGIIGLPN…LSTLIKQIHK (167 aa)) folds into the OBG-type G domain. Residues 165–172 (GLPNAGKS), 190–194 (FTTLE), 211–214 (DIPG), 278–281 (NKSD), and 306–308 (SSI) each bind GTP. Positions 172 and 192 each coordinate Mg(2+).

This sequence belongs to the TRAFAC class OBG-HflX-like GTPase superfamily. OBG GTPase family. Monomer. The cofactor is Mg(2+).

It localises to the cytoplasm. In terms of biological role, an essential GTPase which binds GTP, GDP and possibly (p)ppGpp with moderate affinity, with high nucleotide exchange rates and a fairly low GTP hydrolysis rate. Plays a role in control of the cell cycle, stress response, ribosome biogenesis and in those bacteria that undergo differentiation, in morphogenesis control. This is GTPase Obg from Ehrlichia canis (strain Jake).